A 434-amino-acid polypeptide reads, in one-letter code: Methylenetetrahydrofolate--tRNA-(uracil-5-)-methyltransferase TrmFO (434 aa).

10–15 (GAGLAG) provides a ligand contact to FAD.

The protein belongs to the MnmG family. TrmFO subfamily. FAD serves as cofactor.

It is found in the cytoplasm. The catalysed reaction is uridine(54) in tRNA + (6R)-5,10-methylene-5,6,7,8-tetrahydrofolate + NADH + H(+) = 5-methyluridine(54) in tRNA + (6S)-5,6,7,8-tetrahydrofolate + NAD(+). It catalyses the reaction uridine(54) in tRNA + (6R)-5,10-methylene-5,6,7,8-tetrahydrofolate + NADPH + H(+) = 5-methyluridine(54) in tRNA + (6S)-5,6,7,8-tetrahydrofolate + NADP(+). Its function is as follows. Catalyzes the folate-dependent formation of 5-methyl-uridine at position 54 (M-5-U54) in all tRNAs. This is Methylenetetrahydrofolate--tRNA-(uracil-5-)-methyltransferase TrmFO from Bacillus cereus (strain ATCC 14579 / DSM 31 / CCUG 7414 / JCM 2152 / NBRC 15305 / NCIMB 9373 / NCTC 2599 / NRRL B-3711).